The sequence spans 155 residues: Small ribosomal subunit protein uS7c (155 aa).

The protein belongs to the universal ribosomal protein uS7 family. In terms of assembly, part of the 30S ribosomal subunit.

It localises to the plastid. It is found in the chloroplast. In terms of biological role, one of the primary rRNA binding proteins, it binds directly to 16S rRNA where it nucleates assembly of the head domain of the 30S subunit. This is Small ribosomal subunit protein uS7c (rps7) from Saururus cernuus (Lizard's tail).